A 440-amino-acid chain; its full sequence is MVSSSPVSPSKETDRKSGEKWTAEDPSRPAKWWYSTFHTVTAMIGAGVLSLPYAMAYLGWGPGTFVLAMTWGLTLNTMWQMVQLHECVPGTRFDRYIDLGRYAFGPKLGPWIVLPQQLIVQVGCNIVYMVTGGKCLKQFVEITCSTCTPVRQSYWILGFGGVHFILSQLPNFNSVAGVSLAAAVMSLCYSTIAWGGSIAHGRVPDVSYDYKATNPGDFTFRVFNALGQISFAFAGHAVALEIQATMPSTPERPSKVPMWQGVIGAYVVNAVCYFPVALICYWAFGQDVDDNVLMNLQRPAWLIAAANLMVVVHVIGSYQVFAMPVFDLLERMMVNKFGFKHGVVLRFFTRTIYVAFTLFIGVSFPFFGDLLGFFGGFGFAPTSFFLPSIMWLIIKKPRRFSVTWFVNWISIIVGVFIMLASTIGGLRNIIADSSTYSFYA.

Polar residues predominate over residues 1-10 (MVSSSPVSPS). The interval 1–25 (MVSSSPVSPSKETDRKSGEKWTAED) is disordered. Residues 1–31 (MVSSSPVSPSKETDRKSGEKWTAEDPSRPAK) lie on the Cytoplasmic side of the membrane. The segment covering 11-25 (KETDRKSGEKWTAED) has biased composition (basic and acidic residues). A helical transmembrane segment spans residues 32–51 (WWYSTFHTVTAMIGAGVLSL). The Extracellular segment spans residues 52–61 (PYAMAYLGWG). Residues 62–82 (PGTFVLAMTWGLTLNTMWQMV) form a helical membrane-spanning segment. Over 83–109 (QLHECVPGTRFDRYIDLGRYAFGPKLG) the chain is Cytoplasmic. A helical membrane pass occupies residues 110–130 (PWIVLPQQLIVQVGCNIVYMV). The Extracellular portion of the chain corresponds to 131–152 (TGGKCLKQFVEITCSTCTPVRQ). Residues 153–173 (SYWILGFGGVHFILSQLPNFN) traverse the membrane as a helical segment. A topological domain (cytoplasmic) is located at residue Ser174. Residues 175–195 (VAGVSLAAAVMSLCYSTIAWG) traverse the membrane as a helical segment. The Extracellular segment spans residues 196 to 221 (GSIAHGRVPDVSYDYKATNPGDFTFR). The chain crosses the membrane as a helical span at residues 222–242 (VFNALGQISFAFAGHAVALEI). Residues 243 to 261 (QATMPSTPERPSKVPMWQG) lie on the Cytoplasmic side of the membrane. Residues 262–282 (VIGAYVVNAVCYFPVALICYW) traverse the membrane as a helical segment. The Extracellular portion of the chain corresponds to 283–300 (AFGQDVDDNVLMNLQRPA). A helical membrane pass occupies residues 301 to 321 (WLIAAANLMVVVHVIGSYQVF). Over 322 to 353 (AMPVFDLLERMMVNKFGFKHGVVLRFFTRTIY) the chain is Cytoplasmic. 2 helical membrane-spanning segments follow: residues 354-374 (VAFT…LGFF) and 375-395 (GGFG…LIIK). The Cytoplasmic segment spans residues 396-399 (KPRR). Residues 400–420 (FSVTWFVNWISIIVGVFIMLA) traverse the membrane as a helical segment. Topologically, residues 421-440 (STIGGLRNIIADSSTYSFYA) are extracellular.

It belongs to the amino acid/polyamine transporter 2 family. Amino acid/auxin permease (AAAP) (TC 2.A.18.2) subfamily.

The protein localises to the cell membrane. Functionally, amino acid transporter. The sequence is that of Lysine histidine transporter-like 6 from Arabidopsis thaliana (Mouse-ear cress).